The sequence spans 67 residues: MKTQTALFSFFLVLLLVATQTEGGILDAITGLLGKRALRNQNFVDYAFDPSLSAADWRALETLLEEY.

The first 23 residues, 1–23 (MKTQTALFSFFLVLLLVATQTEG), serve as a signal peptide directing secretion. At L33 the chain carries Leucine amide. Positions 37–67 (ALRNQNFVDYAFDPSLSAADWRALETLLEEY) are excised as a propeptide.

It belongs to the non-disulfide-bridged peptide (NDBP) superfamily. Short antimicrobial peptide (group 4) family. Expressed by the venom gland.

Its subcellular location is the secreted. Functionally, antimicrobial peptide. The chain is Peptide Ctry2606 from Chaerilus tryznai (Scorpion).